Consider the following 86-residue polypeptide: Mu-theraphotoxin-Cg2a 2 (86 aa).

Positions Met1–Ala21 are cleaved as a signal peptide. Residues Ala22–Arg50 constitute a propeptide that is removed on maturation. Disulfide bonds link Cys52-Cys66, Cys59-Cys71, and Cys65-Cys78. Phenylalanine amide is present on Phe84.

The protein belongs to the neurotoxin 10 (Hwtx-1) family. 37 (Jztx-31) subfamily. As to expression, expressed by the venom gland.

It is found in the secreted. Inhibits both peak current and fast inactivation of voltage-gated sodium channels (Nav) channels. Inhibits the inactivation of Nav on DRG neurons (EC(50)=1.77 uM) and peak current of cardiac myocytes (IC(50)=0.90 uM). The polypeptide is Mu-theraphotoxin-Cg2a 2 (Chilobrachys guangxiensis (Chinese earth tiger tarantula)).